The chain runs to 1009 residues: Protein translocase subunit SecA (1009 aa).

Residues glutamine 86, 104–108, and aspartate 497 each bind ATP; that span reads GEGKT. Disordered stretches follow at residues 869-894 and 949-1009; these read AVPQ…GQQP and ERRP…RNAG. Low complexity-rich tracts occupy residues 883-894 and 953-973; these read PVPAATAPGQQP and SGAA…AGAG. Residues cysteine 990, cysteine 992, cysteine 1001, and histidine 1002 each contribute to the Zn(2+) site.

The protein belongs to the SecA family. Monomer and homodimer. Part of the essential Sec protein translocation apparatus which comprises SecA, SecYEG and auxiliary proteins SecDF. Other proteins may also be involved. Zn(2+) serves as cofactor.

It localises to the cell membrane. Its subcellular location is the cytoplasm. It carries out the reaction ATP + H2O + cellular proteinSide 1 = ADP + phosphate + cellular proteinSide 2.. In terms of biological role, part of the Sec protein translocase complex. Interacts with the SecYEG preprotein conducting channel. Has a central role in coupling the hydrolysis of ATP to the transfer of proteins into and across the cell membrane, serving as an ATP-driven molecular motor driving the stepwise translocation of polypeptide chains across the membrane. The sequence is that of Protein translocase subunit SecA from Acidothermus cellulolyticus (strain ATCC 43068 / DSM 8971 / 11B).